The chain runs to 174 residues: DNA replication inhibitor plutonium (174 aa).

ANK repeat units lie at residues 39–68 (YGNT…NIFA) and 72–103 (FGQN…DFNL). At Thr167 the chain carries Phosphothreonine.

In terms of biological role, inhibits DNA replication early in developments. May bind and block the action of a replication or initiation factor. The chain is DNA replication inhibitor plutonium (plu) from Drosophila melanogaster (Fruit fly).